Reading from the N-terminus, the 1172-residue chain is Protein diaphanous homolog 3 (1172 aa).

Residues 1-15 (MEKHRARALGRDSKA) show a composition bias toward basic and acidic residues. The tract at residues 1–36 (MEKHRARALGRDSKASRRKGLPSAPPAGPYELGEKR) is disordered. The short motif at 16 to 39 (SRRKGLPSAPPAGPYELGEKRPKL) is the Nuclear localization signal element. Thr-47 is modified (phosphothreonine). Ser-56 carries the phosphoserine modification. The interval 57–96 (IRIPKGSKKERPPLPQLKTVSGSSDYSSVSSETMENNPKS) is disordered. Positions 77–87 (SGSSDYSSVSS) are enriched in low complexity. The GBD/FH3 domain maps to 94–456 (PKSLSENEVL…QIVLHRDGID (363 aa)). A Phosphoserine modification is found at Ser-155. The stretch at 493–530 (CKKFEKECTDHQETQAQLQKKEAKINELQAELQAFKSQ) forms a coiled coil. The segment at 535–586 (PPGTKIPLQTSAKGEPGPSAFPPAPPALGAGVPPPPPPPPPPPPPLPGMAMP) is disordered. Positions 541 to 611 (PLQTSAKGEP…GQNFIPLNLP (71 aa)) constitute an FH1 domain. The span at 553 to 581 (SAFPPAPPALGAGVPPPPPPPPPPPPPLP) shows a compositional bias: pro residues. The region spanning 616–1014 (PKKEFKPEIS…EKRARIAKER (399 aa)) is the FH2 domain. Positions 1037–1067 (DETGVMDSLLEALQSGAAFRDRRKRTPKLKD) constitute a DAD domain. Phosphoserine occurs at positions 1073 and 1158. A Nuclear export signal motif is present at residues 1163-1172 (EALLARLRAL).

The protein belongs to the formin homology family. Diaphanous subfamily. Post-translationally, ubiquitinated. Expressed in testis. Present in Sertoli cells (at protein level).

The protein localises to the cytoplasm. It is found in the nucleus. Its function is as follows. Actin nucleation and elongation factor required for the assembly of F-actin structures, such as actin cables and stress fibers. Required for cytokinesis, stress fiber formation and transcriptional activation of the serum response factor. Binds to GTP-bound form of Rho and to profilin: acts in a Rho-dependent manner to recruit profilin to the membrane, where it promotes actin polymerization. DFR proteins couple Rho and Src tyrosine kinase during signaling and the regulation of actin dynamics. Also acts as an actin nucleation and elongation factor in the nucleus by promoting nuclear actin polymerization inside the nucleus to drive serum-dependent SRF-MRTFA activity. In Rattus norvegicus (Rat), this protein is Protein diaphanous homolog 3.